The chain runs to 238 residues: Urease subunit alpha (238 aa).

The interval 1–102 (MKLTPKELDK…LVTVHTPIEA (102 aa)) is urease gamma. The segment at 103-238 (NGKLVPGELF…DDNYVKTIKE (136 aa)) is urease beta.

This sequence in the N-terminal section; belongs to the urease gamma subunit family. It in the C-terminal section; belongs to the urease beta subunit family. As to quaternary structure, heterohexamer of 3 UreA (alpha) and 3 UreB (beta) subunits. Four heterohexamers assemble to form a 16 nm dodecameric complex.

It catalyses the reaction urea + 2 H2O + H(+) = hydrogencarbonate + 2 NH4(+). It functions in the pathway nitrogen metabolism; urea degradation; CO(2) and NH(3) from urea (urease route): step 1/1. The sequence is that of Urease subunit alpha from Helicobacter pylori (strain J99 / ATCC 700824) (Campylobacter pylori J99).